The sequence spans 161 residues: MSTLGSTCFTEEQEALVVKSWSVMKKNSAELGLKLFLKIFEIAPSAQKLFSFLRDSKVPLEENPKLKPHAMSVFVMTCESAAQLRKAGKVTVRESTLKKLGATHYKYGVVNEHFEVTKFALLDTIKEAVPEMWSPEMKNAWTQAYDQLVGAIKSEMKPSSS.

A Globin domain is found at 8–157 (CFTEEQEALV…LVGAIKSEMK (150 aa)). Residues 41 to 45 (EIAPS) carry the Homodimerization motif. Heme b-binding residues include serine 51, lysine 65, histidine 69, lysine 99, threonine 103, and histidine 104. Positions 111–123 (NEHFEVTKFALLD) match the Homodimerization motif.

The protein belongs to the plant globin family. Homodimer. Heme b serves as cofactor. In terms of tissue distribution, mainly expressed in root nodules, and, to a lower extent, in leaves, roots, stems, flowers and fruits. Accumulates in mature root nodules.

The enzyme catalyses Fe(III)-heme b-[protein] + nitric oxide + H2O = Fe(II)-heme b-[protein] + nitrite + 2 H(+). Its function is as follows. Phytoglobin that reduces nitrite to nitric oxide (NO) under anoxic conditions (e.g. during flooding or in waterlogged soil) and upon root nodulation. Required for general plant development and during nodulation, especially for the onset of symbiosis. Monitors nitric oxide (NO) levels during early phase of the nitrogen-fixing symbiosis and buffers oxygen in functioning nodules. May not function as an oxygen storage or transport protein. Has an unusually high affinity for O(2) through a hexacoordinate heme iron because of a very low dissociation constant. In Lotus japonicus (Lotus corniculatus var. japonicus), this protein is Anaerobic nitrite reductase Glb1-1.